The chain runs to 86 residues: Elicitor peptide 5 (86 aa).

A propeptide spanning residues 1–59 (MQQERDHKRDCCKLMPQTVKAFFKCLRFRRSSSSSSDMVKARARNEEKEEPSSIETSTR) is cleaved from the precursor. Residues 31-86 (SSSSSSDMVKARARNEEKEEPSSIETSTRSLNVMRKGIRKQPVSSGKRGGVNDYDM) are disordered. Residues 39-51 (VKARARNEEKEEP) show a composition bias toward basic and acidic residues.

The protein belongs to the brassicaceae elicitor peptide family.

Elicitor of plant defense. The protein is Elicitor peptide 5 (PEP5) of Arabidopsis thaliana (Mouse-ear cress).